The primary structure comprises 224 residues: ATP-dependent Clp protease proteolytic subunit 1 (224 aa).

Ser120 serves as the catalytic Nucleophile. His145 is an active-site residue.

This sequence belongs to the peptidase S14 family. As to quaternary structure, fourteen ClpP subunits assemble into 2 heptameric rings which stack back to back to give a disk-like structure with a central cavity, resembling the structure of eukaryotic proteasomes.

It localises to the cytoplasm. The enzyme catalyses Hydrolysis of proteins to small peptides in the presence of ATP and magnesium. alpha-casein is the usual test substrate. In the absence of ATP, only oligopeptides shorter than five residues are hydrolyzed (such as succinyl-Leu-Tyr-|-NHMec, and Leu-Tyr-Leu-|-Tyr-Trp, in which cleavage of the -Tyr-|-Leu- and -Tyr-|-Trp bonds also occurs).. Its function is as follows. Cleaves peptides in various proteins in a process that requires ATP hydrolysis. Has a chymotrypsin-like activity. Plays a major role in the degradation of misfolded proteins. The protein is ATP-dependent Clp protease proteolytic subunit 1 of Prochlorococcus marinus (strain MIT 9313).